The following is a 354-amino-acid chain: Ferredoxin--NADP reductase 2 (354 aa).

Residues Thr14, Asp33, Gln41, Tyr46, Ala86, Phe121, Asp289, and Thr330 each contribute to the FAD site.

This sequence belongs to the ferredoxin--NADP reductase type 2 family. Homodimer. Requires FAD as cofactor.

It catalyses the reaction 2 reduced [2Fe-2S]-[ferredoxin] + NADP(+) + H(+) = 2 oxidized [2Fe-2S]-[ferredoxin] + NADPH. This is Ferredoxin--NADP reductase 2 from Christiangramia forsetii (strain DSM 17595 / CGMCC 1.15422 / KT0803) (Gramella forsetii).